The primary structure comprises 141 residues: Hemoglobin subunit alpha-A (141 aa).

The Globin domain maps to 1–141 (VLSASDKANV…VGTVLTAKYR (141 aa)). Position 58 (His58) interacts with O2. His87 is a heme b binding site.

This sequence belongs to the globin family. In terms of assembly, heterotetramer of two alpha chains and two beta chains. In terms of tissue distribution, red blood cells.

Functionally, involved in oxygen transport from the lung to the various peripheral tissues. The sequence is that of Hemoglobin subunit alpha-A (HBAA) from Sturnus vulgaris (Starling).